The sequence spans 179 residues: Large ribosomal subunit protein uL6 (179 aa).

This sequence belongs to the universal ribosomal protein uL6 family. Part of the 50S ribosomal subunit.

Functionally, this protein binds to the 23S rRNA, and is important in its secondary structure. It is located near the subunit interface in the base of the L7/L12 stalk, and near the tRNA binding site of the peptidyltransferase center. The chain is Large ribosomal subunit protein uL6 from Prochlorococcus marinus (strain NATL2A).